Consider the following 129-residue polypeptide: MKRRTAREKALQSLFQIDVSDIEPNEAMQHALDGQESDAFFEQLVYGVLENKEKIDEMIKRHLVNWKLDRLANVDRAILRLSAYEMIFLDDIPVNVSMNEAIELAKQFGDDKSAKFVNGVLSNIKSDLE.

The protein belongs to the NusB family.

Involved in transcription antitermination. Required for transcription of ribosomal RNA (rRNA) genes. Binds specifically to the boxA antiterminator sequence of the ribosomal RNA (rrn) operons. In Bacillus licheniformis (strain ATCC 14580 / DSM 13 / JCM 2505 / CCUG 7422 / NBRC 12200 / NCIMB 9375 / NCTC 10341 / NRRL NRS-1264 / Gibson 46), this protein is Transcription antitermination protein NusB.